Here is a 1481-residue protein sequence, read N- to C-terminus: RNA helicase aquarius (1481 aa).

The interval 1 to 416 (MAAPAQPKKI…LVSRHERRIS (416 aa)) is helical region with structural similarity to ARM repeat domains. The segment at 417–1481 (QIQQLNQMPL…DAESVPTETE (1065 aa)) is required for assembly of the IB complex. The segment at 754-773 (RSGKGKKRKDADGEEDDTEE) is disordered. ATP is bound by residues Gln801, Gln806, and 826-831 (GTGKTD). The residue at position 1055 (Lys1055) is an N6-acetyllysine. A compositionally biased stretch (acidic residues) spans 1396 to 1414 (EEGEEGQSQETEMEAEEET). The interval 1396–1481 (EEGEEGQSQE…DAESVPTETE (86 aa)) is disordered. Residues 1418–1448 (QGNLTPSPADASLSQETPAAQPDCSSQTEDT) are compositionally biased toward polar residues. Residues 1455–1468 (ATAAEPVSAAAEAA) show a composition bias toward low complexity.

It belongs to the CWF11 family. Identified in the spliceosome C complex. Component of the XAB2 complex, a multimeric protein complex composed of XAB2, PRPF19, AQR, ZNF830, ISY1, and PPIE. Identified in a pentameric intron-binding (IB) complex composed of AQR, XAB2, ISY1, ZNF830 and PPIE that is incorporated into the spliceosome as a preassembled complex. The IB complex does not contain PRPF19. Within the spliceosome, interacts with SNRPA1, SF3B1, SF3B3, SF3A1 and SF3A2.

The protein localises to the nucleus. Its subcellular location is the nucleoplasm. It carries out the reaction ATP + H2O = ADP + phosphate + H(+). Its function is as follows. Involved in pre-mRNA splicing as component of the spliceosome. Intron-binding spliceosomal protein required to link pre-mRNA splicing and snoRNP (small nucleolar ribonucleoprotein) biogenesis. Plays a key role in position-dependent assembly of intron-encoded box C/D small snoRNP, splicing being required for snoRNP assembly. May act by helping the folding of the snoRNA sequence. Binds to intron of pre-mRNAs in a sequence-independent manner, contacting the region between snoRNA and the branchpoint of introns (40 nucleotides upstream of the branchpoint) during the late stages of splicing. Has ATP-dependent RNA helicase activity and can unwind double-stranded RNA molecules with a 3' overhang (in vitro). The protein is RNA helicase aquarius (Aqr) of Mus musculus (Mouse).